The sequence spans 291 residues: Undecaprenyl-diphosphatase (291 aa).

Transmembrane regions (helical) follow at residues 1 to 21, 48 to 68, 102 to 122, 126 to 146, 162 to 182, 203 to 223, 231 to 251, and 267 to 287; these read MFII…LTEF, SAFT…AWVF, LHVL…DDFI, LFSV…MIIA, INYF…WPGF, SDFT…LSLL, IADI…GLIA, and FAIY…GFGI.

The protein belongs to the UppP family.

The protein resides in the cell membrane. It carries out the reaction di-trans,octa-cis-undecaprenyl diphosphate + H2O = di-trans,octa-cis-undecaprenyl phosphate + phosphate + H(+). In terms of biological role, catalyzes the dephosphorylation of undecaprenyl diphosphate (UPP). Confers resistance to bacitracin. The polypeptide is Undecaprenyl-diphosphatase (Staphylococcus aureus (strain bovine RF122 / ET3-1)).